The following is a 338-amino-acid chain: tRNA N6-adenosine threonylcarbamoyltransferase (338 aa).

Fe cation is bound by residues His-109 and His-113. Substrate-binding positions include 132-136 (AISGA), Asp-165, Gly-178, and Asn-277. Asp-302 contacts Fe cation.

Belongs to the KAE1 / TsaD family. The cofactor is Fe(2+).

The protein localises to the cytoplasm. The catalysed reaction is L-threonylcarbamoyladenylate + adenosine(37) in tRNA = N(6)-L-threonylcarbamoyladenosine(37) in tRNA + AMP + H(+). Its function is as follows. Required for the formation of a threonylcarbamoyl group on adenosine at position 37 (t(6)A37) in tRNAs that read codons beginning with adenine. Is involved in the transfer of the threonylcarbamoyl moiety of threonylcarbamoyl-AMP (TC-AMP) to the N6 group of A37, together with TsaE and TsaB. TsaD likely plays a direct catalytic role in this reaction. The chain is tRNA N6-adenosine threonylcarbamoyltransferase from Chlamydia trachomatis serovar A (strain ATCC VR-571B / DSM 19440 / HAR-13).